Here is a 566-residue protein sequence, read N- to C-terminus: Cytoplasmic polyadenylation element-binding protein 2 (566 aa).

2 disordered regions span residues 17–46 and 64–98; these read FWGN…SVEG and LERL…IQEQ. A compositionally biased stretch (acidic residues) spans 87-98; that stretch reads DSEEEEEDIQEQ. The RRM domain maps to 430–512; sequence MVAFIGGVPR…KRVEIKPYFF (83 aa).

Cytoplasmic polyadenylation element binding protein that binds to and regulates the translation of specific mRNAs. The polypeptide is Cytoplasmic polyadenylation element-binding protein 2 (cpb-2) (Caenorhabditis briggsae).